Reading from the N-terminus, the 451-residue chain is Phosphoglucosamine mutase (451 aa).

The active-site Phosphoserine intermediate is Ser-101. 4 residues coordinate Mg(2+): Ser-101, Asp-240, Asp-242, and Asp-244. Residue Ser-101 is modified to Phosphoserine.

It belongs to the phosphohexose mutase family. It depends on Mg(2+) as a cofactor. In terms of processing, activated by phosphorylation.

It carries out the reaction alpha-D-glucosamine 1-phosphate = D-glucosamine 6-phosphate. Catalyzes the conversion of glucosamine-6-phosphate to glucosamine-1-phosphate. In Thioalkalivibrio sulfidiphilus (strain HL-EbGR7), this protein is Phosphoglucosamine mutase.